A 573-amino-acid chain; its full sequence is Solute carrier family 41 member 2 (573 aa).

The Extracellular segment spans residues 1 to 162 (MTHSKGRPVT…KESSGVMALQ (162 aa)). S137 and S138 each carry phosphoserine. The helical transmembrane segment at 163 to 183 (ILVPFLLAGFGTVSAGMVLDI) threads the bilayer. At 184-195 (VQHWEVFKNVTE) the chain is on the cytoplasmic side. Residues 196 to 216 (VFILVPALLGLKGNLEMTLAS) form a helical membrane-spanning segment. Residues 217 to 245 (RLSTAVNVGKMDSPIEKWNLIIGNLALKQ) are Extracellular-facing. Residues 246–266 (VQATVVGFLAAVAAIILGWIP) form a helical membrane-spanning segment. Residues 267–282 (EGKYYLSHSILLCSSS) are Cytoplasmic-facing. A helical membrane pass occupies residues 283 to 303 (VATAFIASLLQGIIMVGVIVG). Residues 304-313 (SKKTGINPDN) are Extracellular-facing. A helical transmembrane segment spans residues 314-334 (VATPIAASFGDLITLAILAWI). Residues 335-347 (SQGLYSCLETYYY) lie on the Cytoplasmic side of the membrane. Residues 348-368 (ISPLVCAFFLALTPIWIIIAA) traverse the membrane as a helical segment. Residues 369-376 (KHPATRTV) lie on the Extracellular side of the membrane. Residues 377–397 (LHSGWEPVITAMVISSIGGLI) traverse the membrane as a helical segment. Residues 398 to 406 (LDTTVSDPN) are Cytoplasmic-facing. The chain crosses the membrane as a helical span at residues 407–427 (LVGIVVYTPVINGIGGNLVAI). At 428-469 (QASRISTYLHLHSIPGELPEEPKGCSYPFRTFFGSGVNNKSA) the chain is on the extracellular side. A helical membrane pass occupies residues 470-490 (QVLLLFVIPGHLIFLYTIHLM). The Cytoplasmic segment spans residues 491–498 (KSGHTSLT). A helical membrane pass occupies residues 499-519 (VVFVVVYLFAAVLQVFTLLWI). At 520-543 (ADWMVHRFWRKGKDPDSFSIPYLT) the chain is on the extracellular side. A helical transmembrane segment spans residues 544–564 (ALGDLLGTALLALSFHFLWLI). Residues 565–573 (GDRDGDVGD) are Cytoplasmic-facing.

Belongs to the SLC41A transporter family.

It localises to the cell membrane. The enzyme catalyses Mg(2+)(in) = Mg(2+)(out). It carries out the reaction Mn(2+)(in) = Mn(2+)(out). The catalysed reaction is Co(2+)(in) = Co(2+)(out). It catalyses the reaction Ni(2+)(in) = Ni(2+)(out). The enzyme catalyses Fe(2+)(in) = Fe(2+)(out). In terms of biological role, acts as a plasma-membrane magnesium transporter. Can also mediate the transport of other divalent metal cations in an order of Ba(2+) &gt; Ni(2+) &gt; Co(2+) &gt; Fe(2+) &gt; Mn(2+). This is Solute carrier family 41 member 2 (Slc41a2) from Mus musculus (Mouse).